The primary structure comprises 149 residues: Nucleoside diphosphate kinase (149 aa).

The ATP site is built by Lys-9, Phe-57, Arg-85, Thr-91, Arg-102, and Asn-112. The active-site Pros-phosphohistidine intermediate is His-115.

Belongs to the NDK family. Homotetramer. It depends on Mg(2+) as a cofactor.

It is found in the cytoplasm. It carries out the reaction a 2'-deoxyribonucleoside 5'-diphosphate + ATP = a 2'-deoxyribonucleoside 5'-triphosphate + ADP. The enzyme catalyses a ribonucleoside 5'-diphosphate + ATP = a ribonucleoside 5'-triphosphate + ADP. Functionally, major role in the synthesis of nucleoside triphosphates other than ATP. The ATP gamma phosphate is transferred to the NDP beta phosphate via a ping-pong mechanism, using a phosphorylated active-site intermediate. This chain is Nucleoside diphosphate kinase, found in Synechocystis sp. (strain ATCC 27184 / PCC 6803 / Kazusa).